Reading from the N-terminus, the 276-residue chain is Large ribosomal subunit protein uL2 (276 aa).

Residues 224-254 (VMNPVDHPHGGGEGRTSGGRHPVTPWGVPTK) are disordered.

The protein belongs to the universal ribosomal protein uL2 family. Part of the 50S ribosomal subunit. Forms a bridge to the 30S subunit in the 70S ribosome.

One of the primary rRNA binding proteins. Required for association of the 30S and 50S subunits to form the 70S ribosome, for tRNA binding and peptide bond formation. It has been suggested to have peptidyltransferase activity; this is somewhat controversial. Makes several contacts with the 16S rRNA in the 70S ribosome. This is Large ribosomal subunit protein uL2 from Gluconobacter oxydans (strain 621H) (Gluconobacter suboxydans).